A 483-amino-acid polypeptide reads, in one-letter code: Essential nuclear protein 1 (483 aa).

Disordered stretches follow at residues 1-21 (MARASSTKARKQRHDPLLKDL), 33-55 (KKKLAQNDAANHDAANEEDGYID), 67-123 (KEQQ…EGDY), and 171-200 (ESQVEDMQDDEPLANEQNTSRGNISSGLKS). Residues 96–123 (YDDEDEDEDEDEEAFGEDISDFEPEGDY) show a composition bias toward acidic residues. Serine 172 is subject to Phosphoserine; by ATM or ATR. A compositionally biased stretch (acidic residues) spans 174-183 (VEDMQDDEPL). Positions 185–198 (NEQNTSRGNISSGL) are enriched in polar residues. Residues serine 190 and serine 404 each carry the phosphoserine modification.

Belongs to the bystin family.

The protein resides in the cytoplasm. Its subcellular location is the nucleus. The protein localises to the nucleolus. Required for normal export of the pre-40S particles from the nucleus to the cytoplasm. Its subcellular location and association with pre-40S subunit shifts from mixed cytoplasm/nucleus to all nuclear in RPS19 disruptions, suggesting it acts after the ribosomal protein. This chain is Essential nuclear protein 1 (ENP1), found in Saccharomyces cerevisiae (strain ATCC 204508 / S288c) (Baker's yeast).